Here is a 316-residue protein sequence, read N- to C-terminus: Ribosomal RNA small subunit methyltransferase H (316 aa).

S-adenosyl-L-methionine contacts are provided by residues 35 to 37 (SGH), D55, F84, D105, and Q112.

Belongs to the methyltransferase superfamily. RsmH family.

The protein resides in the cytoplasm. The catalysed reaction is cytidine(1402) in 16S rRNA + S-adenosyl-L-methionine = N(4)-methylcytidine(1402) in 16S rRNA + S-adenosyl-L-homocysteine + H(+). Functionally, specifically methylates the N4 position of cytidine in position 1402 (C1402) of 16S rRNA. The polypeptide is Ribosomal RNA small subunit methyltransferase H (Streptococcus equi subsp. equi (strain 4047)).